Reading from the N-terminus, the 125-residue chain is Large ribosomal subunit protein bL17 (125 aa).

Belongs to the bacterial ribosomal protein bL17 family. In terms of assembly, part of the 50S ribosomal subunit. Contacts protein L32.

The protein is Large ribosomal subunit protein bL17 of Marinomonas sp. (strain MWYL1).